Consider the following 68-residue polypeptide: Small ribosomal subunit protein bS21 (68 aa).

Residues 39-68 form a disordered region; that stretch reads PPSVKRVRKKQESERRHRKERAMRRRMMEE. The span at 54 to 68 shows a compositional bias: basic residues; it reads RHRKERAMRRRMMEE.

The protein belongs to the bacterial ribosomal protein bS21 family.

This Orientia tsutsugamushi (strain Boryong) (Rickettsia tsutsugamushi) protein is Small ribosomal subunit protein bS21.